We begin with the raw amino-acid sequence, 330 residues long: Aspartate--ammonia ligase (330 aa).

Belongs to the class-II aminoacyl-tRNA synthetase family. AsnA subfamily.

The protein resides in the cytoplasm. The catalysed reaction is L-aspartate + NH4(+) + ATP = L-asparagine + AMP + diphosphate + H(+). It functions in the pathway amino-acid biosynthesis; L-asparagine biosynthesis; L-asparagine from L-aspartate (ammonia route): step 1/1. In Haemophilus influenzae (strain PittGG), this protein is Aspartate--ammonia ligase.